Reading from the N-terminus, the 722-residue chain is MSWVRFTKTGVAVVATSAAAVLALDMTNERRFQRQVKDHFRTVHADRLAELNKRAPSALPTRKDILTNLSKGEEFDVLIIGGGATGAGVALDAQTRGLKTALVELDDFSSGTSSRSTKLIHGGVRYLQAAIMKLDLEQYRMVKEALFERHNLLEIAPHLSSPLPIMLPIYKLWQVPYYWSGIKAYDFVSGKRVLKNSFFINKSQALERFPMLRNESLKGALIYYDGQHNDARMNLAIILTAIRHGAACANHVRVEKLNKDETGKVIGAHVRDMVTGGEWDIKAKAVINATGPFTDSIRLMGDPETARPICAPSSGVHITLPGYYSPSNTGLLDPDTSDGRVIFFLPWERMTIAGTTDAPSDVTLSPQPTDHDIEFILQEIRGYLSKDVSVRRGDVMSAWSGLRPLVRDPNKKDTKSLARNHIIEVGKSGLITIAGGKWTTYRHMAEETVDRVVEVHGLKTENGCVTPGLLLEGAHDWNSLQYIHLVQDYGMEVDVAQHLSNTYGDRAFVVARMCKMTGKRWPIVGQRLHPEFPYLDAEVRYAVREYACTAIDVIARRMRLAFLNTYAAHEVLPDVVRVMGQELGWSSAEQRAQLEKARTFIDMEMGQNAKQTAVSNVALNLTKEEMQRAKERFQQLDKDRKGHITVNDLRKHFREHNQKIDERVLHELLNEVDLNKNGEIEIAEFFQLYSGLKGGQLTGNRLVGYLDEIHGTPSVNRACGGI.

A mitochondrion-targeting transit peptide spans 1 to 43 (MSWVRFTKTGVAVVATSAAAVLALDMTNERRFQRQVKDHFRTV). 76–104 (DVLIIGGGATGAGVALDAQTRGLKTALVE) is an FAD binding site. 2 consecutive EF-hand domains span residues 624–659 (EEMQ…HNQK) and 660–695 (IDER…LKGG). 5 residues coordinate Ca(2+): aspartate 673, asparagine 675, asparagine 677, glutamate 679, and glutamate 684.

Belongs to the FAD-dependent glycerol-3-phosphate dehydrogenase family. FAD is required as a cofactor.

The protein resides in the mitochondrion. The catalysed reaction is a quinone + sn-glycerol 3-phosphate = dihydroxyacetone phosphate + a quinol. It participates in polyol metabolism; glycerol degradation via glycerol kinase pathway; glycerone phosphate from sn-glycerol 3-phosphate (anaerobic route): step 1/1. With respect to regulation, calcium-binding enhances the activity of the enzyme. In Caenorhabditis elegans, this protein is Probable glycerol-3-phosphate dehydrogenase, mitochondrial.